We begin with the raw amino-acid sequence, 307 residues long: G-protein coupled receptor 35 (307 aa).

The Extracellular segment spans residues 1 to 18 (MNSTTCNSTLTWPASVNN). N-linked (GlcNAc...) asparagine glycans are attached at residues N2 and N7. Residues 19 to 39 (FFIIYSALLLVLGLLLNSVAL) form a helical membrane-spanning segment. Topologically, residues 40–53 (WVFCYRMHQWTETR) are cytoplasmic. Residues 54–74 (IYMTNLAVADLCLLCSLPFVL) traverse the membrane as a helical segment. Residues 75–88 (YSLKYSSSDTPVCQ) lie on the Extracellular side of the membrane. Cysteines 87 and 160 form a disulfide. The helical transmembrane segment at 89–110 (LSQGIYLANRYMSISLVTAIAV) threads the bilayer. The Cytoplasmic portion of the chain corresponds to 111–129 (DRYVAVRHPLRARELRSPR). Residues 130 to 150 (QAAAVCVALWVIVVTSLVVRW) form a helical membrane-spanning segment. At 151–176 (RLGMQEGGFCFSSQTRRNFSTTAFSL) the chain is on the extracellular side. Residues 177–197 (LGFYLPLAIVVFCSLQVVTVL) form a helical membrane-spanning segment. The Cytoplasmic segment spans residues 198 to 217 (SRRPAADVGQAEATQKATHM). A helical membrane pass occupies residues 218–238 (VWANLAVFVICFLPLHVVLTV). At 239–257 (QVSLNLNTCAARDTFSRAL) the chain is on the extracellular side. Residues 258-278 (SITGKLSDTNCCLDAICYYYM) form a helical membrane-spanning segment. Topologically, residues 279–307 (AREFQEASKPATSSNTPHKSQDSQILSLT) are cytoplasmic. Residues S286, S292, S298, and S301 each carry the phosphoserine modification. The disordered stretch occupies residues 288-307 (PATSSNTPHKSQDSQILSLT).

It belongs to the G-protein coupled receptor 1 family. Post-translationally, multiply phosphorylated in clusters of serines and threonines in the C-terminal tail. Phosphorylation of Ser-298 and Ser-301 is mediated by GRK5 and/or GRK6. As to expression, predominantly expressed in immune and gastrointestinal tissues. Strongly GPR35 expressed in colonic macrophages.

It localises to the cell membrane. In terms of biological role, G-protein coupled receptor that binds to several ligands including the tryptophan metabolite kynurenic acid (KYNA), lysophosphatidic acid (LPA) or 5-hydroxyindoleacetic acid (5-HIAA) with high affinity, leading to rapid and transient activation of numerous intracellular signaling pathways. Plays a role in neutrophil recruitment to sites of inflammation and bacterial clearance through the major serotonin metabolite 5-HIAA that acts as a physiological ligand. Stimulates lipid metabolism, thermogenic, and anti-inflammatory gene expression in adipose tissue once activated by kynurenic acid. In macrophages, activation by lysophosphatidic acid promotes GPR35-induced signaling with a distinct transcriptional profile characterized by TNF production associated with ERK and NF-kappa-B activation. In turn, induces chemotaxis of macrophages. The polypeptide is G-protein coupled receptor 35 (Gpr35) (Mus musculus (Mouse)).